The primary structure comprises 29 residues: MNEAKSLFTTFLILAFLLFLLYAFYEAAF.

Residues L7 to A27 traverse the membrane as a helical segment.

As to quaternary structure, interacts with SERCA. As to expression, strongly expressed in embryonic and larval somatic muscles and postembryonic heart.

The protein resides in the sarcoplasmic reticulum membrane. Functionally, plays an essential role in the regulation of calcium transport at the sarcoplasmic reticulum (SR), which is secondarily required for regular muscle contraction. The protein is Sarcolamban B of Drosophila melanogaster (Fruit fly).